Here is a 161-residue protein sequence, read N- to C-terminus: Peptidyl-prolyl cis-trans isomerase-like 3 (161 aa).

S2 is subject to N-acetylserine. The PPIase cyclophilin-type domain occupies 2–154; that stretch reads SVTLHTDVGD…NDVHIKDITI (153 aa). R61 is modified (omega-N-methylarginine).

This sequence belongs to the cyclophilin-type PPIase family. PPIL3 subfamily. In terms of assembly, identified in the spliceosome C complex.

The catalysed reaction is [protein]-peptidylproline (omega=180) = [protein]-peptidylproline (omega=0). Its function is as follows. PPIases accelerate the folding of proteins. It catalyzes the cis-trans isomerization of proline imidic peptide bonds in oligopeptides. May be involved in pre-mRNA splicing. The polypeptide is Peptidyl-prolyl cis-trans isomerase-like 3 (Ppil3) (Mus musculus (Mouse)).